The following is a 296-amino-acid chain: Nitrogenase iron protein (296 aa).

Position 11 to 18 (11 to 18) interacts with ATP; the sequence is GKGGIGKS. Cys99 contributes to the [4Fe-4S] cluster binding site. Arg102 bears the ADP-ribosylarginine; by dinitrogenase reductase ADP-ribosyltransferase mark. Cys134 contacts [4Fe-4S] cluster.

It belongs to the NifH/BchL/ChlL family. In terms of assembly, homodimer. [4Fe-4S] cluster serves as cofactor. Post-translationally, the reversible ADP-ribosylation of Arg-102 inactivates the nitrogenase reductase and regulates nitrogenase activity.

The catalysed reaction is N2 + 8 reduced [2Fe-2S]-[ferredoxin] + 16 ATP + 16 H2O = H2 + 8 oxidized [2Fe-2S]-[ferredoxin] + 2 NH4(+) + 16 ADP + 16 phosphate + 6 H(+). In terms of biological role, the key enzymatic reactions in nitrogen fixation are catalyzed by the nitrogenase complex, which has 2 components: the iron protein and the molybdenum-iron protein. In Dechloromonas aromatica (strain RCB), this protein is Nitrogenase iron protein.